Here is a 436-residue protein sequence, read N- to C-terminus: 3-oxo-tetronate kinase (436 aa).

ATP contacts are provided by residues Ser-272, 372 to 375, and Gly-415; that span reads GGET.

Belongs to the four-carbon acid sugar kinase family.

It catalyses the reaction 3-dehydro-L-erythronate + ATP = 3-dehydro-4-O-phospho-L-erythronate + ADP + H(+). The catalysed reaction is 3-dehydro-D-erythronate + ATP = 3-dehydro-4-O-phospho-D-erythronate + ADP + H(+). Its function is as follows. Catalyzes the ATP-dependent phosphorylation of 3-oxo-tetronate to 3-oxo-tetronate 4-phosphate. This chain is 3-oxo-tetronate kinase, found in Brucella melitensis biotype 1 (strain ATCC 23456 / CCUG 17765 / NCTC 10094 / 16M).